Here is a 374-residue protein sequence, read N- to C-terminus: uncharacterized protein (374 aa).

29–36 serves as a coordination point for ATP; the sequence is GSLNSGKS.

It belongs to the archaeal ATPase family.

This is an uncharacterized protein from Methanocaldococcus jannaschii (strain ATCC 43067 / DSM 2661 / JAL-1 / JCM 10045 / NBRC 100440) (Methanococcus jannaschii).